The chain runs to 574 residues: MRTSQYLLTTTRETPADAEIISHQLMLRGSFIRRLAAGLYTWLPLGLRVLRKVENIIREEMDKAGAQEVLMPAVQPAELWRETGRWEQYGPELLRFTDRHQRFFCFGPTHEEVITDLIRREIRSYKQLPANFYQIQLKFRDEIRPRFGVMRSREFLMKDAYSFHPDQTSLAQTYNQMYETYSRIFDRIGLTFRAVQADTGAIGGKTSHEFHVLAASGEDAIAFSDKSTYAANVELAAALPPTDKPASPKETLSLIETPGQCTIKEISQFLNIPSSRCIKTLLVQGSEGELVALALRGDHELNAVKAQKLPQVANPLQFATPEQVWKTCNASIGSIGPMGLAIPLIADHGAVQLTDFACGANMEGKHFTGVNWGRDLPEPSTADIRNVVDGDPSPDGEGTLSIARGIEVGHIFQLGEKYSQAMNATVLDETGRAISLAMGCYGIGVSRVVAAAIEQNHDEHGIIWPASIAPFQLALVPINAHKSARVKEMSDRLYTELQAAGFEVLLDDRQLRPGVIFADMDLIGIPYRLVISERGLENNTVEYKRRQDGKTCAIQLDNFISGLKAELKAPISRR.

It belongs to the class-II aminoacyl-tRNA synthetase family. ProS type 1 subfamily. As to quaternary structure, homodimer.

The protein localises to the cytoplasm. The catalysed reaction is tRNA(Pro) + L-proline + ATP = L-prolyl-tRNA(Pro) + AMP + diphosphate. Functionally, catalyzes the attachment of proline to tRNA(Pro) in a two-step reaction: proline is first activated by ATP to form Pro-AMP and then transferred to the acceptor end of tRNA(Pro). As ProRS can inadvertently accommodate and process non-cognate amino acids such as alanine and cysteine, to avoid such errors it has two additional distinct editing activities against alanine. One activity is designated as 'pretransfer' editing and involves the tRNA(Pro)-independent hydrolysis of activated Ala-AMP. The other activity is designated 'posttransfer' editing and involves deacylation of mischarged Ala-tRNA(Pro). The misacylated Cys-tRNA(Pro) is not edited by ProRS. The sequence is that of Proline--tRNA ligase from Nitrosococcus oceani (strain ATCC 19707 / BCRC 17464 / JCM 30415 / NCIMB 11848 / C-107).